Reading from the N-terminus, the 523-residue chain is Tyrosine ammonia-lyase (523 aa).

The active-site Proton donor/acceptor is the Y60. H89 lines the substrate pocket. The 5-imidazolinone (Ala-Gly) cross-link spans 149–151 (ASG). The residue at position 150 (S150) is a 2,3-didehydroalanine (Ser). Residues R303 and 432–436 (NAANQ) each bind substrate.

The protein belongs to the PAL/histidase family. As to quaternary structure, homotetramer. Contains an active site 4-methylidene-imidazol-5-one (MIO), which is formed autocatalytically by cyclization and dehydration of residues Ala-Ser-Gly.

It carries out the reaction L-tyrosine = (E)-4-coumarate + NH4(+). Its function is as follows. Catalyzes the non-oxidative deamination of L-tyrosine. Has very low phenylalanine ammonia-lyase activity (in vitro). In Cereibacter sphaeroides (strain ATCC 17023 / DSM 158 / JCM 6121 / CCUG 31486 / LMG 2827 / NBRC 12203 / NCIMB 8253 / ATH 2.4.1.) (Rhodobacter sphaeroides), this protein is Tyrosine ammonia-lyase (hutH).